A 523-amino-acid chain; its full sequence is Leucine-rich repeat transmembrane neuronal protein 1 (523 aa).

The N-terminal stretch at 1-34 (MDFLLLGLCLHWLLRRPSGVVLCLLGACFQMLPA) is a signal peptide. An LRRNT domain is found at 35–63 (APSGCPGQCRCEGRLLYCEALNLTEAPHN). The Extracellular portion of the chain corresponds to 35-428 (APSGCPGQCR…HAENAVQIHK (394 aa)). Asn-56 and Asn-63 each carry an N-linked (GlcNAc...) asparagine glycan. LRR repeat units follow at residues 64 to 87 (LSGLLGLSLRYNSLSELRAGQFTG), 89 to 111 (MQLTWLYLDHNHICSVQGDAFQK), 112 to 135 (LRRVKELTLSSNQITELANTTFRP), 136 to 159 (MPNLRSVDLSYNKLQALAPDLFHG), 161 to 183 (RKLTTLHMRANAIQFVPVRIFQD), 184 to 207 (CRSLKFLDIGYNQLKSLARNSFAG), 209 to 231 (FKLTELHLEHNDLIKVNFAHFPR), 233 to 255 (ISLNSLCLRRNKVAIVVSSLDWV), 256 to 278 (WNLEKMDLSGNEIEYMEPHVFET), and 280 to 302 (PYLQSLQLDSNRLTYIEPRILNS). Asn-130 is a glycosylation site (N-linked (GlcNAc...) asparagine). Positions 314–365 (NLWDCGRNVCALASWLSNFQGRYDANLQCASPEYAQGEDVLDAVYAFHLCED) constitute an LRRCT domain. N-linked (GlcNAc...) asparagine glycosylation occurs at Asn-381. A helical transmembrane segment spans residues 429–449 (VVTGTMALIFSFLIVVLVLYV). Topologically, residues 450–523 (SWKCFPASLR…HQQPARECEV (74 aa)) are cytoplasmic. Residues 520 to 523 (ECEV) carry the May be involved in DLG4-binding motif.

It belongs to the LRRTM family. Interacts with DLG4.

The protein localises to the cell membrane. It is found in the postsynaptic cell membrane. Its function is as follows. Exhibits strong synaptogenic activity, restricted to excitatory presynaptic differentiation, acting at both pre- and postsynaptic level. The polypeptide is Leucine-rich repeat transmembrane neuronal protein 1 (Lrrtm1) (Rattus norvegicus (Rat)).